The chain runs to 433 residues: Trigger factor (433 aa).

Residues 163 to 248 (GDTVNIDFSG…VNEIKFKEVP (86 aa)) form the PPIase FKBP-type domain.

The protein belongs to the FKBP-type PPIase family. Tig subfamily.

The protein localises to the cytoplasm. It catalyses the reaction [protein]-peptidylproline (omega=180) = [protein]-peptidylproline (omega=0). Involved in protein export. Acts as a chaperone by maintaining the newly synthesized protein in an open conformation. Functions as a peptidyl-prolyl cis-trans isomerase. The sequence is that of Trigger factor from Staphylococcus aureus (strain COL).